The primary structure comprises 328 residues: RING finger protein 175 (328 aa).

5 helical membrane-spanning segments follow: residues Met-51–Val-71, Leu-83–Trp-103, Arg-104–Phe-121, Ala-149–Phe-169, and Gly-180–Ile-200. The RING-type; atypical zinc-finger motif lies at Cys-227–Lys-277.

The protein resides in the membrane. This Homo sapiens (Human) protein is RING finger protein 175 (RNF175).